A 115-amino-acid polypeptide reads, in one-letter code: U3-lycotoxin-Ls1q (115 aa).

An N-terminal signal peptide occupies residues 1–20; the sequence is MKFVLLFGVLLVTLFSYSSA. Residues 21-44 constitute a propeptide that is removed on maturation; it reads EMFDDFDQADEDELLSLIEKEEAR. 4 disulfide bridges follow: C48–C63, C55–C72, C62–C87, and C74–C85.

It belongs to the neurotoxin 19 (CSTX) family. 01 subfamily. In terms of tissue distribution, expressed by the venom gland.

Its subcellular location is the secreted. The protein is U3-lycotoxin-Ls1q of Lycosa singoriensis (Wolf spider).